The chain runs to 658 residues: Probable transketolase (658 aa).

Substrate is bound at residue H24. Residues H64 and 113–115 each bind thiamine diphosphate; that span reads GPL. Position 154 (D154) interacts with Mg(2+). G155 and N184 together coordinate thiamine diphosphate. The Mg(2+) site is built by N184 and I186. Residues H259, R354, and S381 each coordinate substrate. H259 contributes to the thiamine diphosphate binding site. The active-site Proton donor is E408. A thiamine diphosphate-binding site is contributed by F434. 3 residues coordinate substrate: H458, D466, and R517.

This sequence belongs to the transketolase family. As to quaternary structure, homodimer. It depends on Mg(2+) as a cofactor. Ca(2+) serves as cofactor. Mn(2+) is required as a cofactor. Requires Co(2+) as cofactor. The cofactor is thiamine diphosphate.

The catalysed reaction is D-sedoheptulose 7-phosphate + D-glyceraldehyde 3-phosphate = aldehydo-D-ribose 5-phosphate + D-xylulose 5-phosphate. Necessary for high-efficiency recombination chromosomal DNA during genetic transformation. In terms of biological role, catalyzes the transfer of a two-carbon ketol group from a ketose donor to an aldose acceptor, via a covalent intermediate with the cofactor thiamine pyrophosphate. The sequence is that of Probable transketolase (tkt) from Streptococcus pneumoniae serotype 4 (strain ATCC BAA-334 / TIGR4).